The sequence spans 615 residues: UvrABC system protein C (615 aa).

The GIY-YIG domain occupies 14-91 (TSPGCYIHKD…IKENKPKYNI (78 aa)). Positions 196 to 231 (NKIIDELKGKMAAAAQTMEFERAAEYRDLIQAIGTL) constitute a UVR domain.

Belongs to the UvrC family. Interacts with UvrB in an incision complex.

It is found in the cytoplasm. Its function is as follows. The UvrABC repair system catalyzes the recognition and processing of DNA lesions. UvrC both incises the 5' and 3' sides of the lesion. The N-terminal half is responsible for the 3' incision and the C-terminal half is responsible for the 5' incision. The protein is UvrABC system protein C of Streptococcus pneumoniae (strain ATCC 700669 / Spain 23F-1).